The chain runs to 214 residues: Riboflavin kinase (214 aa).

The segment at 1–26 (MRPDGPRDPVAGPDSGPEPPYPVRLS) is disordered. T44 and N46 together coordinate Mg(2+). Residue E116 is the Nucleophile of the active site.

Belongs to the flavokinase family. It depends on Zn(2+) as a cofactor. Requires Mg(2+) as cofactor.

The enzyme catalyses riboflavin + ATP = FMN + ADP + H(+). It participates in cofactor biosynthesis; FMN biosynthesis; FMN from riboflavin (ATP route): step 1/1. Catalyzes the phosphorylation of riboflavin (vitamin B2) to form flavin mononucleotide (FMN) coenzyme. The polypeptide is Riboflavin kinase (fmn1) (Aspergillus fumigatus (strain ATCC MYA-4609 / CBS 101355 / FGSC A1100 / Af293) (Neosartorya fumigata)).